The sequence spans 502 residues: Arabinose import ATP-binding protein AraG (502 aa).

2 ABC transporter domains span residues 6–241 and 252–497; these read LEFD…MVGR and REVG…MVES. Position 38–45 (38–45) interacts with ATP; sequence GENGAGKS.

The protein belongs to the ABC transporter superfamily. Arabinose importer (TC 3.A.1.2.2) family. In terms of assembly, the complex is composed of two ATP-binding proteins (AraG), two transmembrane proteins (AraH) and a solute-binding protein (AraF).

It localises to the cell inner membrane. It carries out the reaction L-arabinose(out) + ATP + H2O = L-arabinose(in) + ADP + phosphate + H(+). Functionally, part of the ABC transporter complex AraFGH involved in arabinose import. Responsible for energy coupling to the transport system. This chain is Arabinose import ATP-binding protein AraG, found in Mannheimia succiniciproducens (strain KCTC 0769BP / MBEL55E).